We begin with the raw amino-acid sequence, 161 residues long: Bacterioferritin (161 aa).

Residues 1–145 (MKGEPKVIER…TQLDLLAKIG (145 aa)) form the Ferritin-like diiron domain. 2 residues coordinate Fe cation: E18 and E51. Residue M52 participates in heme b binding. Residues H54, E94, E127, and H130 each coordinate Fe cation.

The protein belongs to the bacterioferritin family. In terms of assembly, homooligomer of 24 subunits, arranged as 12 dimers, that are packed together to form an approximately spherical molecule with a central cavity, in which large amounts of iron can be deposited. Heme b is required as a cofactor.

The enzyme catalyses 4 Fe(2+) + O2 + 4 H(+) = 4 Fe(3+) + 2 H2O. The catalysed reaction is Fe(2+)(in) = Fe(2+)(out). Functionally, iron-storage protein, whose ferroxidase center binds Fe(2+), oxidizes it using dioxygen to Fe(3+), and participates in the subsequent Fe(3+) oxide mineral core formation within the central cavity of the BFR protein shell. This is Bacterioferritin (bfr) from Brucella melitensis biotype 1 (strain ATCC 23456 / CCUG 17765 / NCTC 10094 / 16M).